Reading from the N-terminus, the 422-residue chain is Acetyl-CoA acetyltransferase, mitochondrial (422 aa).

The transit peptide at 1–28 (MPVLAALLRRGPLLQRRVQEIRYAERSY) directs the protein to the mitochondrion. Residue Lys61 is modified to N6-acetyllysine; alternate. An N6-succinyllysine; alternate modification is found at Lys61. Residue Lys73 is modified to N6-succinyllysine. Cys121 (acyl-thioester intermediate) is an active-site residue. Lys169, Lys176, Lys185, and Lys197 each carry N6-acetyllysine; alternate. Lys169, Lys176, Lys185, and Lys197 each carry N6-succinyllysine; alternate. Residue Tyr214 participates in CoA binding. Tyr214 provides a ligand contact to K(+). Residue Lys218 is modified to N6-acetyllysine; alternate. Lys218 bears the N6-succinyllysine; alternate mark. The residue at position 238 (Lys238) is an N6-succinyllysine. Lys240 carries the post-translational modification N6-acetyllysine; alternate. An N6-succinyllysine; alternate modification is found at Lys240. N6-acetyllysine occurs at positions 246 and 252. CoA contacts are provided by residues 253-255 (RVD) and Lys258. Lys258 carries the post-translational modification N6-acetyllysine; alternate. Position 258 is an N6-succinyllysine; alternate (Lys258). Residues Lys261 and Lys263 each carry the N6-succinyllysine modification. Positions 275, 276, and 278 each coordinate K(+). Ser279 is a CoA binding site. Residue Lys333 is modified to N6-acetyllysine. K(+) is bound at residue Val376. Cys408 functions as the Proton donor/acceptor in the catalytic mechanism.

This sequence belongs to the thiolase-like superfamily. Thiolase family. As to quaternary structure, homotetramer. In terms of processing, succinylation at Lys-263, adjacent to a coenzyme A binding site. Desuccinylated by SIRT5.

It is found in the mitochondrion. It carries out the reaction 2 acetyl-CoA = acetoacetyl-CoA + CoA. The catalysed reaction is propanoyl-CoA + acetyl-CoA = 2-methyl-3-oxobutanoyl-CoA + CoA. It participates in lipid metabolism; fatty acid beta-oxidation. With respect to regulation, activated by potassium ions, but not sodium ions. Its function is as follows. This is one of the enzymes that catalyzes the last step of the mitochondrial beta-oxidation pathway, an aerobic process breaking down fatty acids into acetyl-CoA. Using free coenzyme A/CoA, catalyzes the thiolytic cleavage of medium- to long-chain 3-oxoacyl-CoAs into acetyl-CoA and a fatty acyl-CoA shortened by two carbon atoms. The activity of the enzyme is reversible and it can also catalyze the condensation of two acetyl-CoA molecules into acetoacetyl-CoA. Thereby, it plays a major role in ketone body metabolism. In Bos taurus (Bovine), this protein is Acetyl-CoA acetyltransferase, mitochondrial (ACAT1).